A 122-amino-acid chain; its full sequence is UPF0102 protein Gmet_2864 (122 aa).

This sequence belongs to the UPF0102 family.

The polypeptide is UPF0102 protein Gmet_2864 (Geobacter metallireducens (strain ATCC 53774 / DSM 7210 / GS-15)).